The chain runs to 87 residues: Large ribosomal subunit protein bL27 (87 aa).

The disordered stretch occupies residues 1–21 (MAHKKGQGSTQNNRDSAGRRL).

Belongs to the bacterial ribosomal protein bL27 family.

This is Large ribosomal subunit protein bL27 from Nautilia profundicola (strain ATCC BAA-1463 / DSM 18972 / AmH).